The sequence spans 481 residues: MLNRVRRTKIVATLGPSTDKANNLEKIILSGANVLRLNFSHGSSEEHKKRAKKAKEIMFKLNCHIALLGDLQGPKIRISKFKKNSIFLKVNDVFILDANLNEKNGNNERVGIDYKKLPNDLNVNDILLLDDGRIQLKVIKIEKCAIFTKVIIGGILSNNKGINKLGGGLSADALTEKDKKDIILASEIDVDYLAVSFPRCADDLIKARELLKKSGSNAQIIAKIERAEAVFDQNAIENIILSSDAIMIARGDLGVEIGDAELVGIQKKLIRTARKLNKVAITATQMMESMILNPLPTRAEVMDVANAVLDGSDAVMLSAETASGKYPSETVISMAKVCKGAEKVPSINVSRHRLNVEFQSIEEAIAMSSMYAANHLKGITAIITMTESGKTALMTSRITSGLPIFALSKHKKTLNLTALYRGVIPIYFDSDKDGVEAANEAIILLCKKKFLFNNDLVIVTQGDIMGKIGKTNTSRILRVTY.

Residue R36 participates in substrate binding. Positions 38, 40, and 70 each coordinate K(+). 38–41 (NFSH) is a binding site for ATP. ATP contacts are provided by R77 and K160. E225 is a Mg(2+) binding site. Residues G251, D252, and T284 each contribute to the substrate site. D252 is a Mg(2+) binding site.

Belongs to the pyruvate kinase family. In terms of assembly, homotetramer. Mg(2+) is required as a cofactor. The cofactor is K(+).

It catalyses the reaction pyruvate + ATP = phosphoenolpyruvate + ADP + H(+). Its pathway is carbohydrate degradation; glycolysis; pyruvate from D-glyceraldehyde 3-phosphate: step 5/5. Allosterically activated by AMP and by several sugar phosphates. Belongs to type II PK. This Buchnera aphidicola subsp. Schizaphis graminum (strain Sg) protein is Pyruvate kinase (pykA).